The primary structure comprises 1163 residues: Spike glycoprotein (1163 aa).

The N-terminal stretch at 1–18 is a signal peptide; it reads MLERSLLLATLLSALCSA. Over 19 to 1096 the chain is Extracellular; that stretch reads NLFGNNSYVY…LKTYIKWPWY (1078 aa). N-linked (GlcNAc...) asparagine; by host glycosylation is found at N23, N51, N74, N102, N139, N145, N164, N179, N213, N238, N248, N265, N272, N277, N307, N426, N448, N514, N531, N543, N580, N592, N670, and N677. The segment at 770–875 is heptad repeat 1 (HR1); the sequence is IPFATQLQAR…QVDRIITGRL (106 aa). The stretch at 823-867 forms a coiled coil; the sequence is QDVVNKQSSILTETMASLNKNFGAISSVLQDIYQQLDSIQADAQV. 7 N-linked (GlcNAc...) asparagine; by host glycosylation sites follow: N948, N961, N980, N1015, N1039, N1052, and N1075. A heptad repeat 2 (HR2) region spans residues 1025–1106; sequence NDDFDFDDEL…VWLAIAFLTI (82 aa). A coiled-coil region spans residues 1056-1084; it reads PILDIGSEIDRIQGVIQGLNDSLIDLETL. A helical membrane pass occupies residues 1097–1117; it reads VWLAIAFLTIIFILVLCWIFF. Topologically, residues 1118-1163 are cytoplasmic; sequence MTGCCGCCCGCFGIIPLMSKCGKKSSYYTTFDNDVVYEQYRPKKSV. Residues 1160–1163 carry the Di-lysine motif motif; the sequence is KKSV.

Belongs to the gammacoronaviruses spike protein family. In terms of assembly, homotrimer; each monomer consists of a S1 and a S2 subunit. The resulting peplomers protrude from the virus surface as spikes. Post-translationally, specific enzymatic cleavages in vivo yield mature proteins. The precursor is processed into S1 and S2 by host cell furin or furin-like protease to yield the mature S1 and S2 proteins. The cleavage site between S1 and S2 requires the optimal sequence [KR]-X-[KR]-R. Additionally, a second cleavage leads to the release of a fusion peptide after viral attachment to host cell receptor.

The protein localises to the virion membrane. Its subcellular location is the host endoplasmic reticulum-Golgi intermediate compartment membrane. Functionally, attaches the virion to the host cell membrane by interacting with sialic acids, initiating the infection. In terms of biological role, mediates fusion of the virion and cellular membranes by acting as a class I viral fusion protein. Under the current model, the protein has at least 3 conformational states: pre-fusion native state, pre-hairpin intermediate state, and post-fusion hairpin state. During viral and target cell membrane fusion, the coiled coil regions (heptad repeats) assume a trimer-of-hairpins structure, positioning the fusion peptide in close proximity to the C-terminal region of the ectodomain. The formation of this structure appears to drive apposition and subsequent fusion of viral and target cell membranes. Its function is as follows. Acts as a viral fusion peptide after S2 cleavage occurring upon virus endocytosis. In Gallus gallus (Chicken), this protein is Spike glycoprotein.